The sequence spans 237 residues: Uridylate kinase (237 aa).

ATP is bound at residue 11-14; sequence KLSG. Residue glycine 53 coordinates UMP. Glycine 54 and arginine 58 together coordinate ATP. Residues aspartate 73 and 134–141 contribute to the UMP site; that span reads TGNPFFTT. ATP contacts are provided by threonine 161, tyrosine 167, and aspartate 170.

It belongs to the UMP kinase family. Homohexamer.

The protein localises to the cytoplasm. The catalysed reaction is UMP + ATP = UDP + ADP. It functions in the pathway pyrimidine metabolism; CTP biosynthesis via de novo pathway; UDP from UMP (UMPK route): step 1/1. Inhibited by UTP. Catalyzes the reversible phosphorylation of UMP to UDP. In Burkholderia mallei (strain NCTC 10247), this protein is Uridylate kinase.